Reading from the N-terminus, the 156-residue chain is Peptide deformylase (156 aa).

Residues Cys90 and His132 each contribute to the Fe cation site. The active site involves Glu133. His136 is a Fe cation binding site.

Belongs to the polypeptide deformylase family. Requires Fe(2+) as cofactor.

The enzyme catalyses N-terminal N-formyl-L-methionyl-[peptide] + H2O = N-terminal L-methionyl-[peptide] + formate. Removes the formyl group from the N-terminal Met of newly synthesized proteins. Requires at least a dipeptide for an efficient rate of reaction. N-terminal L-methionine is a prerequisite for activity but the enzyme has broad specificity at other positions. The protein is Peptide deformylase of Natranaerobius thermophilus (strain ATCC BAA-1301 / DSM 18059 / JW/NM-WN-LF).